The following is a 480-amino-acid chain: Trigger factor (480 aa).

The PPIase FKBP-type domain occupies 169 to 264 (GDIAVVDFKG…LKELKEKELP (96 aa)). The segment at 441 to 480 (PEGSLSPAEETEAAESDADADVSQTEQENSEPSTTEVTEG) is disordered. The segment covering 449 to 460 (EETEAAESDADA) has biased composition (acidic residues). Residues 462-480 (VSQTEQENSEPSTTEVTEG) show a composition bias toward polar residues.

It belongs to the FKBP-type PPIase family. Tig subfamily.

It localises to the cytoplasm. The catalysed reaction is [protein]-peptidylproline (omega=180) = [protein]-peptidylproline (omega=0). In terms of biological role, involved in protein export. Acts as a chaperone by maintaining the newly synthesized protein in an open conformation. Functions as a peptidyl-prolyl cis-trans isomerase. The polypeptide is Trigger factor (Nostoc punctiforme (strain ATCC 29133 / PCC 73102)).